The primary structure comprises 220 residues: Adenylate kinase (220 aa).

Residue 10–15 (GAGKGT) coordinates ATP. The NMP stretch occupies residues 30-59 (STGDMLRAAVKAGSPLGVEAKGYMDAGKLV). AMP-binding positions include Thr31, Arg36, 57-59 (KLV), 85-88 (GFPR), and Gln92. Residues 122 to 159 (GRRTHPASGRTYHVKFNPPKVEGKDDVTGEPLIQRDDD) are LID. ATP is bound by residues Arg123 and 132-133 (TY). 2 residues coordinate AMP: Arg156 and Arg167. Gly206 contacts ATP.

Belongs to the adenylate kinase family. As to quaternary structure, monomer.

It is found in the cytoplasm. The catalysed reaction is AMP + ATP = 2 ADP. The protein operates within purine metabolism; AMP biosynthesis via salvage pathway; AMP from ADP: step 1/1. Its function is as follows. Catalyzes the reversible transfer of the terminal phosphate group between ATP and AMP. Plays an important role in cellular energy homeostasis and in adenine nucleotide metabolism. This is Adenylate kinase from Burkholderia ambifaria (strain ATCC BAA-244 / DSM 16087 / CCUG 44356 / LMG 19182 / AMMD) (Burkholderia cepacia (strain AMMD)).